The chain runs to 463 residues: Phosphomethylpyrimidine synthase (463 aa).

Residues Asn-80, Met-109, Tyr-138, His-173, 193–195 (SRG), 234–237 (DGLR), and Glu-273 contribute to the substrate site. His-277 contributes to the Zn(2+) binding site. Tyr-300 contacts substrate. His-341 contacts Zn(2+). Residues Cys-421, Cys-424, and Cys-429 each coordinate [4Fe-4S] cluster.

It belongs to the ThiC family. Homodimer. [4Fe-4S] cluster serves as cofactor.

The enzyme catalyses 5-amino-1-(5-phospho-beta-D-ribosyl)imidazole + S-adenosyl-L-methionine = 4-amino-2-methyl-5-(phosphooxymethyl)pyrimidine + CO + 5'-deoxyadenosine + formate + L-methionine + 3 H(+). The protein operates within cofactor biosynthesis; thiamine diphosphate biosynthesis. Functionally, catalyzes the synthesis of the hydroxymethylpyrimidine phosphate (HMP-P) moiety of thiamine from aminoimidazole ribotide (AIR) in a radical S-adenosyl-L-methionine (SAM)-dependent reaction. The sequence is that of Phosphomethylpyrimidine synthase from Anaeromyxobacter sp. (strain K).